Here is a 618-residue protein sequence, read N- to C-terminus: Glutathione-regulated potassium-efflux system protein (618 aa).

12 helical membrane passes run 6 to 26, 32 to 52, 55 to 75, 94 to 114, 118 to 138, 152 to 172, 186 to 206, 227 to 247, 274 to 294, 298 to 318, 336 to 356, and 362 to 382; these read NPEL…VPLF, GSVL…FGIV, PTAV…IIGL, LLQV…LLGL, VSFI…MQSL, VIST…SVAF, WVSI…GKWL, ALLV…SMAM, GLLL…HLVF, ILLL…VYII, MAHG…AEVI, and ATFT…AQIA. The RCK N-terminal domain occupies 409–525; the sequence is EDNVLVIGFG…LIKQDVDFIV (117 aa).

The protein belongs to the monovalent cation:proton antiporter 2 (CPA2) transporter (TC 2.A.37) family.

Its subcellular location is the cell inner membrane. Transport system that facilitate potassium-efflux, possibly by potassium-proton antiport. The polypeptide is Glutathione-regulated potassium-efflux system protein (kefBC) (Haemophilus influenzae (strain ATCC 51907 / DSM 11121 / KW20 / Rd)).